A 292-amino-acid polypeptide reads, in one-letter code: 4-hydroxy-tetrahydrodipicolinate synthase (292 aa).

Residue T45 participates in pyruvate binding. Y133 acts as the Proton donor/acceptor in catalysis. The active-site Schiff-base intermediate with substrate is K161. Residue I203 participates in pyruvate binding.

The protein belongs to the DapA family. In terms of assembly, homodimer.

It is found in the cytoplasm. It catalyses the reaction L-aspartate 4-semialdehyde + pyruvate = (2S,4S)-4-hydroxy-2,3,4,5-tetrahydrodipicolinate + H2O + H(+). It participates in amino-acid biosynthesis; L-lysine biosynthesis via DAP pathway; (S)-tetrahydrodipicolinate from L-aspartate: step 3/4. In terms of biological role, catalyzes the condensation of (S)-aspartate-beta-semialdehyde [(S)-ASA] and pyruvate to 4-hydroxy-tetrahydrodipicolinate (HTPA). In Pseudomonas savastanoi pv. phaseolicola (strain 1448A / Race 6) (Pseudomonas syringae pv. phaseolicola (strain 1448A / Race 6)), this protein is 4-hydroxy-tetrahydrodipicolinate synthase.